A 155-amino-acid polypeptide reads, in one-letter code: Interleukin-2 (155 aa).

The first 20 residues, M1–G20, serve as a signal peptide directing secretion. O-linked (GalNAc...) threonine glycosylation is present at T23. A disulfide bridge links C79 with C127.

The protein belongs to the IL-2 family.

It is found in the secreted. Cytokine produced by activated CD4-positive helper T-cells and to a lesser extend activated CD8-positive T-cells and natural killer (NK) cells that plays pivotal roles in the immune response and tolerance. Binds to a receptor complex composed of either the high-affinity trimeric IL-2R (IL2RA/CD25, IL2RB/CD122 and IL2RG/CD132) or the low-affinity dimeric IL-2R (IL2RB and IL2RG). Interaction with the receptor leads to oligomerization and conformation changes in the IL-2R subunits resulting in downstream signaling starting with phosphorylation of JAK1 and JAK3. In turn, JAK1 and JAK3 phosphorylate the receptor to form a docking site leading to the phosphorylation of several substrates including STAT5. This process leads to activation of several pathways including STAT, phosphoinositide-3-kinase/PI3K and mitogen-activated protein kinase/MAPK pathways. Functions as a T-cell growth factor and can increase NK-cell cytolytic activity as well. Promotes strong proliferation of activated B-cells and subsequently immunoglobulin production. Plays a pivotal role in regulating the adaptive immune system by controlling the survival and proliferation of regulatory T-cells, which are required for the maintenance of immune tolerance. Moreover, participates in the differentiation and homeostasis of effector T-cell subsets, including Th1, Th2, Th17 as well as memory CD8-positive T-cells. In Moschus berezovskii (Chinese forest musk deer), this protein is Interleukin-2 (IL2).